The following is a 515-amino-acid chain: MPKERRSRRRPEPIIRWVSLTLTLLALCQPIQTWRCSLSLGNQQWMTAYNQEAKFSISIDQILEAHNQSPFCAKSPRYTLDSVNGYPKIYWPPPQGRRRFGARAMVTYDCEPRCPYVGADRFDCPHWDNASQADQGSFYVNHQILFLHLKQCHGIFTLTWEIWGYDPLITFSLHKIPDPPQPDFPQLNSDWVPSVRSWALLLNQTARAFPDCAICWEPSPPWAPEILVYNKTISSSGPGLALPDAQIFWVNTSSFNTTQGWHHPSQRLLFNVSQGNALLLPPISLVNLSTASSAPPTRVRRSPVAALTLGLALSVGLTGIKVAVSALSHQRLTSLIHVLEQDQQRLITAINQTHYNLLNVASVVAQNRRGLDWLYIRLGFQSLCPTINEPCCFLRIQNDSIIRLGDLQPLSQRVSTDWQWPWNWDLGLTAWVRETIHSVLSLFLLALLLLFLAPCLIKCLTSRLSKLLRQAPHFPEISFPPKPDSDYQALLPSAPEIYSHLSPTKPDYINLRPCP.

The signal sequence occupies residues methionine 1–threonine 33. Residues tryptophan 34–threonine 435 are Extracellular-facing. 2 N-linked (GlcNAc...) asparagine; by host glycosylation sites follow: asparagine 129 and asparagine 203. Residues cysteine 212–cysteine 215 carry the CXXC motif. Disulfide bonds link cysteine 212–cysteine 215, cysteine 212–cysteine 392, and cysteine 384–cysteine 391. Asparagine 230, asparagine 251, asparagine 256, asparagine 271, and asparagine 287 each carry an N-linked (GlcNAc...) asparagine; by host glycan. The tract at residues valine 304–valine 324 is fusion peptide. 2 coiled-coil regions span residues glutamine 330 to isoleucine 376 and asparagine 388 to tryptophan 420. An N-linked (GlcNAc...) asparagine; by host glycan is attached at asparagine 351. Residues alanine 365–glutamine 381 form an immunosuppression region. The CX6CC signature appears at cysteine 384 to cysteine 392. Asparagine 398 carries an N-linked (GlcNAc...) asparagine; by host glycan. The chain crosses the membrane as a helical span at residues isoleucine 436–leucine 456. Cysteine 455 is lipidated: S-palmitoyl cysteine; by host. Over isoleucine 457 to proline 515 the chain is Cytoplasmic.

In terms of assembly, the mature envelope protein (Env) consists of a trimer of SU-TM heterodimers attached by a labile interchain disulfide bond. Post-translationally, specific enzymatic cleavages in vivo yield mature proteins. Envelope glycoproteins are synthesized as an inactive precursor that is N-glycosylated and processed likely by host cell furin or by a furin-like protease in the Golgi to yield the mature SU and TM proteins. The cleavage site between SU and TM requires the minimal sequence [KR]-X-[KR]-R. The CXXC motif is highly conserved across a broad range of retroviral envelope proteins. It is thought to participate in the formation of a labile disulfide bond possibly with the CX6CC motif present in the transmembrane protein. Isomerization of the intersubunit disulfide bond to an SU intrachain disulfide bond is thought to occur upon receptor recognition in order to allow membrane fusion. In terms of processing, the transmembrane protein is palmitoylated.

It localises to the virion membrane. It is found in the host cell membrane. Functionally, the surface protein (SU) attaches the virus to the host cell by binding to its receptor. This interaction triggers the refolding of the transmembrane protein (TM) and is thought to activate its fusogenic potential by unmasking its fusion peptide. Fusion occurs at the host cell plasma membrane. The transmembrane protein (TM) acts as a class I viral fusion protein. Under the current model, the protein has at least 3 conformational states: pre-fusion native state, pre-hairpin intermediate state, and post-fusion hairpin state. During viral and target cell membrane fusion, the coiled coil regions (heptad repeats) assume a trimer-of-hairpins structure, positioning the fusion peptide in close proximity to the C-terminal region of the ectodomain. The formation of this structure appears to drive apposition and subsequent fusion of viral and target cell membranes. Membranes fusion leads to delivery of the nucleocapsid into the cytoplasm. This is Envelope glycoprotein (env) from Bovine leukemia virus (isolate Australian) (BLV).